The primary structure comprises 235 residues: METTLLFFSQINMCESKEKTFFKLIHGSGKEETSKEAKIRAKEKRNRLSLLVQKPEFHEDTRSSRSGHLAKETRVSPEEAVKWGESFDKLLSHRDGLEAFTRFLKTEFSEENIEFWIACEDFKKSKGPQQIHLKAKAIYEKFIQTDAPKEVNLDFHTKEVITNSITQPTLHSFDAAQSRVYQLMEQDSYTRFLKSDIYLDLMEGRPQRPTNLRRRSRSFTCNEFQDVQSDVAIWL.

A Phosphoserine modification is found at Ser-49. In terms of domain architecture, RGS spans Ser-86–Met-202. Residues Ser-216 and Ser-218 each carry the phosphoserine modification.

Expressed in peripheral leukocytes, bone marrow, platelet, spleen and fetal liver.

Its subcellular location is the cytoplasm. Inhibits signal transduction by increasing the GTPase activity of G protein alpha subunits thereby driving them into their inactive GDP-bound form. Binds to G(i) alpha-1, G(i) alpha-2, G(i) alpha-3 and G(q) alpha. This is Regulator of G-protein signaling 18 (RGS18) from Homo sapiens (Human).